The sequence spans 233 residues: Putative cobalt transport protein CbiM (233 aa).

A run of 6 helical transmembrane segments spans residues 9–29 (PPMWCAVWWVLSGIVIAYGIV), 43–63 (PLVAISGAYMFILSSLKMPSV), 75–95 (LGAVLFGVPITAVLAAIVLLF), 107–127 (TLGANDFSMGIVGPAAAVIVY), 138–158 (TVGIFFAALFGDWLTYVTTAV), and 177–197 (IVIYAYTQVPLAIAEGILTVI).

The protein belongs to the CbiM family. In terms of assembly, forms an energy-coupling factor (ECF) transporter complex composed of an ATP-binding protein (A component, CbiO), a transmembrane protein (T component, CbiQ) and 2 possible substrate-capture proteins (S components, CbiM and CbiN) of unknown stoichimetry.

Its subcellular location is the cell membrane. It participates in cofactor biosynthesis; adenosylcobalamin biosynthesis. Functionally, part of the energy-coupling factor (ECF) transporter complex CbiMNOQ involved in cobalt import. The chain is Putative cobalt transport protein CbiM from Methanocaldococcus jannaschii (strain ATCC 43067 / DSM 2661 / JAL-1 / JCM 10045 / NBRC 100440) (Methanococcus jannaschii).